The sequence spans 226 residues: Myosin regulatory light chain 10 (226 aa).

3 EF-hand domains span residues 84–119, 154–189, and 190–225; these read NSPA…LGRI, DPEE…QADR, and FSEE…GEEK. Aspartate 97, asparagine 99, aspartate 101, and aspartate 108 together coordinate Ca(2+).

In terms of assembly, myosin is a hexamer of 2 heavy chains and 4 light chains.

This is Myosin regulatory light chain 10 (MYL10) from Homo sapiens (Human).